Reading from the N-terminus, the 154-residue chain is Ribosomal RNA large subunit methyltransferase H (154 aa).

Residues leucine 71 and glycine 103 each contribute to the S-adenosyl-L-methionine site.

This sequence belongs to the RNA methyltransferase RlmH family. As to quaternary structure, homodimer.

Its subcellular location is the cytoplasm. It carries out the reaction pseudouridine(1915) in 23S rRNA + S-adenosyl-L-methionine = N(3)-methylpseudouridine(1915) in 23S rRNA + S-adenosyl-L-homocysteine + H(+). In terms of biological role, specifically methylates the pseudouridine at position 1915 (m3Psi1915) in 23S rRNA. The polypeptide is Ribosomal RNA large subunit methyltransferase H (Solidesulfovibrio magneticus (strain ATCC 700980 / DSM 13731 / RS-1) (Desulfovibrio magneticus)).